We begin with the raw amino-acid sequence, 260 residues long: uncharacterized protein (260 aa).

Helical transmembrane passes span 39–59 (IFYLLFIPLSKNFIYTDLIEA), 68–88 (IIVGIYLSYPIFLYQIWSFLI), 111–131 (FLGSCIGYYLLFPIAFTFFLG), 159–179 (LIFSLSICFQLPVLILFLFKI), 193–213 (FIYLFFFILAAILSPPDILSQ), and 214–234 (FILVIPLILFFEISLFCIKLI).

This sequence belongs to the TatC family.

It is found in the mitochondrion membrane. This is an uncharacterized protein from Reclinomonas americana.